The chain runs to 156 residues: Transcriptional regulator MraZ (156 aa).

2 consecutive SpoVT-AbrB domains span residues 5 to 51 (TFEK…GKAL) and 80 to 123 (MAKL…SREA).

The protein belongs to the MraZ family. As to quaternary structure, forms oligomers.

The protein localises to the cytoplasm. Its subcellular location is the nucleoid. The chain is Transcriptional regulator MraZ from Caulobacter vibrioides (strain ATCC 19089 / CIP 103742 / CB 15) (Caulobacter crescentus).